The sequence spans 622 residues: UvrABC system protein C (622 aa).

In terms of domain architecture, GIY-YIG spans 13 to 92; that stretch reads EKPGVYLMKN…IKKYRPKYNI (80 aa). The UVR domain occupies 204–239; the sequence is KDILDKLKNQMEEASNSLQFEKAASLRDKIFAVKKI.

It belongs to the UvrC family. In terms of assembly, interacts with UvrB in an incision complex.

The protein localises to the cytoplasm. Functionally, the UvrABC repair system catalyzes the recognition and processing of DNA lesions. UvrC both incises the 5' and 3' sides of the lesion. The N-terminal half is responsible for the 3' incision and the C-terminal half is responsible for the 5' incision. In Clostridium tetani (strain Massachusetts / E88), this protein is UvrABC system protein C.